Reading from the N-terminus, the 156-residue chain is Cell division protein SepF (156 aa).

Residues 23-36 (SYEKEQTDMKKQQD) show a composition bias toward basic and acidic residues. Positions 23 to 50 (SYEKEQTDMKKQQDPPEQQDVTFPKAQP) are disordered.

It belongs to the SepF family. As to quaternary structure, homodimer. Interacts with FtsZ.

It is found in the cytoplasm. Functionally, cell division protein that is part of the divisome complex and is recruited early to the Z-ring. Probably stimulates Z-ring formation, perhaps through the cross-linking of FtsZ protofilaments. Its function overlaps with FtsA. The sequence is that of Cell division protein SepF from Bacillus thuringiensis (strain Al Hakam).